A 1220-amino-acid polypeptide reads, in one-letter code: Putative cell agglutination protein SPAPB2C8.01 (1220 aa).

An N-terminal signal peptide occupies residues 1–21 (MAVSRLLILICLYSFVTFAYP). Asn-44, Asn-72, Asn-131, and Asn-160 each carry an N-linked (GlcNAc...) asparagine glycan. Repeat copies occupy residues 110–145 (NTIT…EPAA), 146–181 (GTVT…EPEA), 182–217 (GTVT…DTAA), 218–253 (GTVT…EPEA), 254–289 (GTVT…DTAA), 290–325 (GTVT…EPEA), 326–361 (GTVT…DTAA), 362–397 (GTVT…EPEA), 398–433 (GTVT…DTAA), 434–469 (GTVT…EPEA), 470–505 (GTVT…DTAA), 506–541 (GTVT…EPEA), 542–577 (GTVT…DTAA), 578–613 (GTVT…EPEA), 614–649 (GTVT…EPAA), 650–685 (GTVT…EPAA), 686–721 (GTVT…EPAA), 722–757 (GTVT…EPAA), 758–793 (GTVT…DPEA), 794–829 (GSVT…EPAA), 830–865 (GTVT…DPEA), 866–901 (GSVT…EPAA), 902–937 (GTVT…EPSG), and 938–973 (STVT…LPAP). Residues 110–973 (NTITTTLYSG…GTVEVILPAP (864 aa)) form a 24 X 36 AA approximate tandem repeats region. The N-linked (GlcNAc...) asparagine glycan is linked to Asn-232. Asn-304 is a glycosylation site (N-linked (GlcNAc...) asparagine). Asn-376 carries N-linked (GlcNAc...) asparagine glycosylation. Asn-448 is a glycosylation site (N-linked (GlcNAc...) asparagine). N-linked (GlcNAc...) asparagine glycosylation is present at Asn-520. Asn-592 is a glycosylation site (N-linked (GlcNAc...) asparagine). The region spanning 1039 to 1202 (FTQPAYFGSS…YAATSYAYTA (164 aa)) is the PA14 domain.

This sequence belongs to the mam3/map4 family.

It localises to the cell surface. Its function is as follows. May be involved in agglutination during conjugation or other aspects of colony formation. The polypeptide is Putative cell agglutination protein SPAPB2C8.01 (Schizosaccharomyces pombe (strain 972 / ATCC 24843) (Fission yeast)).